The chain runs to 369 residues: Quinolinate synthase (369 aa).

2 residues coordinate iminosuccinate: His47 and Ser64. Position 111 (Cys111) interacts with [4Fe-4S] cluster. Residues 142–144 and Ser163 contribute to the iminosuccinate site; that span reads YVN. A [4Fe-4S] cluster-binding site is contributed by Cys231. Iminosuccinate-binding positions include 257–259 and Thr274; that span reads HPE. Cys321 provides a ligand contact to [4Fe-4S] cluster.

It belongs to the quinolinate synthase family. Type 3 subfamily. It depends on [4Fe-4S] cluster as a cofactor.

It is found in the cytoplasm. The catalysed reaction is iminosuccinate + dihydroxyacetone phosphate = quinolinate + phosphate + 2 H2O + H(+). Its pathway is cofactor biosynthesis; NAD(+) biosynthesis; quinolinate from iminoaspartate: step 1/1. In terms of biological role, catalyzes the condensation of iminoaspartate with dihydroxyacetone phosphate to form quinolinate. The chain is Quinolinate synthase from Bacillus pumilus (strain SAFR-032).